A 518-amino-acid polypeptide reads, in one-letter code: MQASRRTKRDSIPNLYAKCQLSGNCLPDVKNKVEADTLADRLLRWLGSVIYLGGLGIGTGRGSGGSSGYNPLGAPSRVTPSGTVIRPTVPVEGLGPSEIIPVDVVNPGSSSVVPLEDLTVPEVTIDSGEVGGGGLHPSEIDVVTSSDPISDVTGTSSHPTIISGEDNAIAVLDVSPTEPPTKRIALGTRGATSTPHISVISGTTEFGQSSDLNVFVNATFSGDSIGYTEEIPLEELNTIQQFEIETPPKTSTPRETIGRALERARDLYNRRVQQIATRNPAMLGQPSRAIVFGFENPAFDADITQVFERDLEQVAAAPDADFADIVRIGRPRFSQTDTGQIRISRLGRRGTIKTRSGLQIGQAVHFYYDLSTIDTADAIELSTLGQHSGEQSIVDAMIESSFVDPFETPDPTYTEEQQLLDPLTEDFSNSHLVLTSSRRGSSFSIPTIPPGLGLRIYVDDVGSDLFVSYPETRVIPAGGLPTEPFTPLEPPFFSEFYSSDFVYRPSLYRKKRKRSDIF.

A Nuclear localization signal motif is present at residues 1–10 (MQASRRTKRD). Cys19 and Cys25 form a disulfide bridge. Residues 509–515 (RKKRKRS) carry the Nuclear localization signal motif.

It belongs to the papillomaviridae L2 protein family. As to quaternary structure, interacts with major capsid protein L1. Interacts with E2; this interaction inhibits E2 transcriptional activity but not the DNA replication function E2. Interacts with host GADD45GIP1. Interacts with host HSPA8; this interaction is required for L2 nuclear translocation. Interacts with host importins KPNB2 and KPNB3. Forms a complex with importin alpha2-beta1 heterodimers via interaction with the importin alpha2 adapter. Interacts with host DYNLT1; this interaction is essential for virus intracellular transport during entry. Interacts (via C-terminus) with host retromer subunits VPS35 and VPS29. Highly phosphorylated.

Its subcellular location is the virion. The protein localises to the host nucleus. It is found in the host early endosome. The protein resides in the host Golgi apparatus. Functionally, minor protein of the capsid that localizes along the inner surface of the virion, within the central cavities beneath the L1 pentamers. Plays a role in capsid stabilization through interaction with the major capsid protein L1. Once the virion enters the host cell, L2 escorts the genomic DNA into the nucleus by promoting escape from the endosomal compartments and traffic through the host Golgi network. Mechanistically, the C-terminus of L2 possesses a cell-penetrating peptide that protudes from the host endosome, interacts with host cytoplasmic retromer cargo and thereby mediates the capsid delivery to the host trans-Golgi network. Plays a role through its interaction with host dynein in the intracellular microtubule-dependent transport of viral capsid toward the nucleus. Mediates the viral genome import into the nucleus through binding to host importins. Once within the nucleus, L2 localizes viral genomes to host PML bodies in order to activate early gene expression for establishment of infection. Later on, promotes late gene expression by interacting with the viral E2 protein and by inhibiting its transcriptional activation functions. During virion assembly, encapsidates the genome by direct interaction with the viral DNA. This is Minor capsid protein L2 from Homo sapiens (Human).